A 334-amino-acid polypeptide reads, in one-letter code: tRNA-cytidine(32) 2-sulfurtransferase (334 aa).

Residues 74–79 carry the PP-loop motif motif; the sequence is SGGKDS. Residues cysteine 149, cysteine 152, and cysteine 240 each contribute to the [4Fe-4S] cluster site.

The protein belongs to the TtcA family. In terms of assembly, homodimer. Requires Mg(2+) as cofactor. The cofactor is [4Fe-4S] cluster.

It localises to the cytoplasm. The enzyme catalyses cytidine(32) in tRNA + S-sulfanyl-L-cysteinyl-[cysteine desulfurase] + AH2 + ATP = 2-thiocytidine(32) in tRNA + L-cysteinyl-[cysteine desulfurase] + A + AMP + diphosphate + H(+). It functions in the pathway tRNA modification. In terms of biological role, catalyzes the ATP-dependent 2-thiolation of cytidine in position 32 of tRNA, to form 2-thiocytidine (s(2)C32). The sulfur atoms are provided by the cysteine/cysteine desulfurase (IscS) system. This Burkholderia ambifaria (strain ATCC BAA-244 / DSM 16087 / CCUG 44356 / LMG 19182 / AMMD) (Burkholderia cepacia (strain AMMD)) protein is tRNA-cytidine(32) 2-sulfurtransferase.